A 650-amino-acid polypeptide reads, in one-letter code: Aminopeptidase B (650 aa).

298–302 contacts substrate; the sequence is GGMEN. A Zn(2+)-binding site is contributed by His325. The Proton acceptor role is filled by Glu326. Zn(2+) is bound by residues His329 and Glu348. Lys446 is modified (N6-acetyllysine).

This sequence belongs to the peptidase M1 family. Monomer. The cofactor is Zn(2+).

It is found in the secreted. The enzyme catalyses Release of N-terminal Arg and Lys from oligopeptides when P1' is not Pro. Also acts on arylamides of Arg and Lys.. Functionally, exopeptidase which selectively removes arginine and/or lysine residues from the N-terminus of several peptide substrates including Arg(0)-Leu-enkephalin, Arg(0)-Met-enkephalin and Arg(-1)-Lys(0)-somatostatin-14. Can hydrolyze leukotriene A4 (LTA-4) into leukotriene B4 (LTB-4). The polypeptide is Aminopeptidase B (Rnpep) (Mus musculus (Mouse)).